A 395-amino-acid polypeptide reads, in one-letter code: 8-amino-7-oxononanoate synthase (395 aa).

Lys-24 provides a ligand contact to substrate. Pyridoxal 5'-phosphate is bound at residue 111-112; sequence GF. His-136 is a substrate binding site. Residues Ser-184, 209–212, and 240–243 each bind pyridoxal 5'-phosphate; these read DDAH and TLSK. The residue at position 243 (Lys-243) is an N6-(pyridoxal phosphate)lysine. Residue Thr-357 coordinates substrate.

The protein belongs to the class-II pyridoxal-phosphate-dependent aminotransferase family. BioF subfamily. Homodimer. Pyridoxal 5'-phosphate serves as cofactor.

It catalyses the reaction 6-carboxyhexanoyl-[ACP] + L-alanine + H(+) = (8S)-8-amino-7-oxononanoate + holo-[ACP] + CO2. It participates in cofactor biosynthesis; biotin biosynthesis. Catalyzes the decarboxylative condensation of pimeloyl-[acyl-carrier protein] and L-alanine to produce 8-amino-7-oxononanoate (AON), [acyl-carrier protein], and carbon dioxide. This is 8-amino-7-oxononanoate synthase from Treponema denticola (strain ATCC 35405 / DSM 14222 / CIP 103919 / JCM 8153 / KCTC 15104).